Consider the following 96-residue polypeptide: Co-chaperonin GroES (96 aa).

Belongs to the GroES chaperonin family. Heptamer of 7 subunits arranged in a ring. Interacts with the chaperonin GroEL.

It localises to the cytoplasm. Functionally, together with the chaperonin GroEL, plays an essential role in assisting protein folding. The GroEL-GroES system forms a nano-cage that allows encapsulation of the non-native substrate proteins and provides a physical environment optimized to promote and accelerate protein folding. GroES binds to the apical surface of the GroEL ring, thereby capping the opening of the GroEL channel. The sequence is that of Co-chaperonin GroES from Streptococcus pyogenes serotype M18 (strain MGAS8232).